Here is a 189-residue protein sequence, read N- to C-terminus: GTPase KRas (189 aa).

An N-acetylmethionine modification is found at methionine 1. Threonine 2 carries the post-translational modification N-acetylthreonine; in GTPase KRas, N-terminally processed. Residues 10 to 18 (GAGGVGKSA), 29 to 35 (VDEYDPT), and 59 to 60 (AG) contribute to the GTP site. The short motif at 32–40 (YDPTIEDSY) is the Effector region element. The residue at position 104 (lysine 104) is an N6-acetyllysine. 116 to 119 (NKCD) is a GTP binding site. Residues 166 to 185 (YRLKKISKEEKTPGCVKIKK) form a hypervariable region region. Lysine 170 participates in a covalent cross-link: Glycyl lysine isopeptide (Lys-Gly) (interchain with G-Cter in ubiquitin). Cysteine 180 is lipidated: S-palmitoyl cysteine. N6-palmitoyl lysine attachment occurs at residues lysine 182, lysine 184, and lysine 185. Cysteine 186 carries the post-translational modification Cysteine methyl ester. Cysteine 186 carries S-farnesyl cysteine lipidation. Positions 187–189 (VIM) are cleaved as a propeptide — removed in mature form.

The protein belongs to the small GTPase superfamily. Ras family. Interacts with PHLPP. Interacts (active GTP-bound form preferentially) with RGS14. Interacts (when farnesylated) with PDE6D; this promotes dissociation from the cell membrane. Interacts with SOS1. Interacts (when farnesylated) with GPR31. Interacts with RAP1GDS1. Interacts (active GTP-bound form) with both SHOC2 and PP1c (all isoforms) to form a tertiary complex; SHOC2 and PP1c preferably bind M-Ras/MRAS, but they also bind K-Ras/KRAS, N-Ras/NRAS and H-Ras/HRAS. Interacts (GTP-bound form) with MAPKAP1/SIN1; inhibiting K-Ras/KRAS activity. In terms of assembly, interacts (when farnesylated) with GPR31. Post-translationally, acetylation at Lys-104 prevents interaction with guanine nucleotide exchange factors (GEFs). In terms of processing, ubiquitinated by the BCR(LZTR1) E3 ubiquitin ligase complex at Lys-170 in a non-degradative manner, leading to inhibit Ras signaling by decreasing Ras association with membranes. Palmitoylated at Lys-182, Lys-184 and Lys-185. Lysine-depalmitoylation by SIRT2 promotes its localization to endomembranes in endocytic pathways.

It is found in the cell membrane. The protein localises to the endomembrane system. The protein resides in the cytoplasm. Its subcellular location is the cytosol. The catalysed reaction is GTP + H2O = GDP + phosphate + H(+). Its activity is regulated as follows. Alternates between an inactive form bound to GDP and an active form bound to GTP. Activated by a guanine nucleotide-exchange factor (GEF) and inactivated by a GTPase-activating protein (GAP). Interaction with SOS1 promotes exchange of bound GDP to GTP. Ras proteins bind GDP/GTP and possess intrinsic GTPase activity. Plays an important role in the regulation of cell proliferation. Plays a role in promoting oncogenic events by inducing transcriptional silencing of tumor suppressor genes (TSGs) in colorectal cancer (CRC) cells in a ZNF304-dependent manner. This Rattus norvegicus (Rat) protein is GTPase KRas (Kras).